Reading from the N-terminus, the 894-residue chain is Protein SEY1 homolog (894 aa).

Composition is skewed to low complexity over residues 1–10 and 36–48; these read MSEEITTNQT and VQEQ…QEQQ. The tract at residues 1–97 is disordered; the sequence is MSEEITTNQT…QKQQTQEQEH (97 aa). Residues 1-800 are Cytoplasmic-facing; it reads MSEEITTNQT…EQNRLTSGGG (800 aa). The stretch at 21–60 forms a coiled coil; sequence RLSNENIKQEDEEQQVQEQQEQQQQEQQEQIDDQDTQQQE. Residues 49–65 are compositionally biased toward acidic residues; the sequence is EQIDDQDTQQQEDEFVV. A compositionally biased stretch (low complexity) spans 78 to 93; it reads TPTLQETPQQQKQQTQ. The GB1/RHD3-type G domain occupies 138–361; sequence GFDYSVISIL…ADSFIPKRKY (224 aa). 148–155 serves as a coordination point for GTP; it reads GPQSSGKS. A helical transmembrane segment spans residues 801–821; the sequence is VPGYMIILLCVLGFNEFISII. Residues 822-824 are Lumenal-facing; the sequence is SSP. Residues 825-845 form a helical membrane-spanning segment; sequence LLLLLTILLGGVGFVLFKLGL. Topologically, residues 846 to 894 are cytoplasmic; that stretch reads AGPFIDYSSQILVHFISKVKDIVLHVEQLQEQNHNNNNNNNNTPKQKRE.

This sequence belongs to the TRAFAC class dynamin-like GTPase superfamily. GB1/RHD3 GTPase family. RHD3 subfamily.

Its subcellular location is the endoplasmic reticulum membrane. Probable GTP-binding protein that may be involved in cell development. The polypeptide is Protein SEY1 homolog (Dictyostelium discoideum (Social amoeba)).